A 423-amino-acid polypeptide reads, in one-letter code: Cytidylate cyclase (423 aa).

A Guanylate cyclase domain is found at 79 to 184 (CSLFVDISGS…LKIRIGIDFG (106 aa)). Phenylalanine 82 serves as a coordination point for a ribonucleoside 5'-triphosphate. Mn(2+) contacts are provided by aspartate 84, isoleucine 85, and aspartate 128. The interval 290 to 409 (ENEQFYSPRD…ICHDSFGLFI (120 aa)) is AGS-C domain.

Belongs to the adenylyl cyclase class-4/guanylyl cyclase family. Pyrimidine cyclase subfamily. In terms of assembly, homodimer. Requires Mn(2+) as cofactor.

The protein resides in the cytoplasm. It catalyses the reaction CTP = 3',5'-cyclic CMP + diphosphate. In terms of biological role, pycsar (pyrimidine cyclase system for antiphage resistance) provides immunity against bacteriophage. The pyrimidine cyclase (PycC) synthesizes cyclic nucleotides in response to infection; these serve as specific second messenger signals. The signal activates the adjacent effector, leading to bacterial cell death and abortive phage infection. A clade E Pycsar system. Functionally, the pyrimidine cyclase gene of a two-gene Pycsar system, weakly generates cyclic CMP (cCMP) from CTP, has little to no activity on ATP, GTP or UTP. Expression of this and adjacent effector SaPycTM (AC P0DV39) probably confers resistance to bacteriophage. The genes are probably only expressed in response to bacteriophage infection. This Staphylococcus aureus protein is Cytidylate cyclase.